Reading from the N-terminus, the 388-residue chain is Succinate--CoA ligase [ADP-forming] subunit beta (388 aa).

The 236-residue stretch at 9–244 folds into the ATP-grasp domain; it reads KQLFARYGLP…QSQEDPRAAQ (236 aa). Residues Lys-46, 53–55, Glu-99, Thr-102, and Glu-107 each bind ATP; that span reads GRG. Mg(2+) contacts are provided by Asn-199 and Asp-213. Substrate is bound by residues Asn-264 and 321–323; that span reads GIV.

This sequence belongs to the succinate/malate CoA ligase beta subunit family. Heterotetramer of two alpha and two beta subunits. Mg(2+) serves as cofactor.

It carries out the reaction succinate + ATP + CoA = succinyl-CoA + ADP + phosphate. The catalysed reaction is GTP + succinate + CoA = succinyl-CoA + GDP + phosphate. It participates in carbohydrate metabolism; tricarboxylic acid cycle; succinate from succinyl-CoA (ligase route): step 1/1. Succinyl-CoA synthetase functions in the citric acid cycle (TCA), coupling the hydrolysis of succinyl-CoA to the synthesis of either ATP or GTP and thus represents the only step of substrate-level phosphorylation in the TCA. The beta subunit provides nucleotide specificity of the enzyme and binds the substrate succinate, while the binding sites for coenzyme A and phosphate are found in the alpha subunit. The polypeptide is Succinate--CoA ligase [ADP-forming] subunit beta (Shigella flexneri serotype 5b (strain 8401)).